The following is a 59-amino-acid chain: Large ribosomal subunit protein uL30 (59 aa).

The protein belongs to the universal ribosomal protein uL30 family. As to quaternary structure, part of the 50S ribosomal subunit.

This Erwinia tasmaniensis (strain DSM 17950 / CFBP 7177 / CIP 109463 / NCPPB 4357 / Et1/99) protein is Large ribosomal subunit protein uL30.